The chain runs to 5148 residues: E3 ubiquitin-protein ligase RNF213 (5148 aa).

The segment covering 38 to 48 (DNTLVVSSTPE) has biased composition (polar residues). A disordered region spans residues 38–341 (DNTLVVSSTP…QAAAPEPTSA (304 aa)). The segment covering 69 to 78 (PGKELEKPEE) has biased composition (basic and acidic residues). Residues 101–113 (GTISSSEAPSSGL) are compositionally biased toward polar residues. The segment covering 130 to 146 (PQNQAQQGGAASQPGHP) has biased composition (low complexity). Position 196 is a phosphoserine (S196). Composition is skewed to basic and acidic residues over residues 233-245 (SKGETSGQEKKVP), 257-267 (AGKETGEDVRK), and 279-289 (KHGDQEAELKG). Residues 319–335 (AAAVKTQQAAAPQQAAA) show a composition bias toward low complexity. K1128 participates in a covalent cross-link: Glycyl lysine isopeptide (Lys-Gly) (interchain with G-Cter in SUMO2). ATP is bound by residues 1957–1962 (GVGKSL), E2060, A2114, D2116, and R2177. Position 2234 is a phosphoserine (S2234). Residues K2460 and S2535 each coordinate ATP. Residues 3435–3465 (EEMEIETSQSKELAEEQMEVEDSEEMKKASD) are a coiled coil. Zn(2+) is bound by residues C3947, C3950, C3962, H3964, C3967, C3970, C3982, C3985, C4451, and H4455. An RING-type zinc finger spans residues 3947–3986 (CFICHGDAQDPVCLPCDHVYCLRCIQTWLIPGQMMCPYCL). An RZ-type zinc finger spans residues 4429 to 4501 (MPEDLLVHAR…IRNNEDRTQT (73 aa)). The Nucleophile; for E3 ubiquitin-lipopolysaccharide ligase activity role is filled by C4462. Residues C4471 and C4474 each contribute to the Zn(2+) site.

This sequence belongs to the AAA ATPase family. Monomer. Interacts with UBE2L3/UBCH7; UBE2L3/UBCH7 is the most efficient ubiquitin-conjugating enzyme E2 for the ubiquitin ligase activity. Interacts with UBE2N/UBC13; promoting 'Lys-63'-linked ubiquitination of target proteins.

It localises to the cytoplasm. It is found in the cytosol. Its subcellular location is the lipid droplet. The enzyme catalyses S-ubiquitinyl-[E2 ubiquitin-conjugating enzyme]-L-cysteine + [acceptor protein]-L-lysine = [E2 ubiquitin-conjugating enzyme]-L-cysteine + N(6)-ubiquitinyl-[acceptor protein]-L-lysine.. It catalyses the reaction ATP + H2O = ADP + phosphate + H(+). It functions in the pathway protein modification; protein ubiquitination. In terms of biological role, atypical E3 ubiquitin ligase that can catalyze ubiquitination of both proteins and lipids, and which is involved in various processes, such as lipid metabolism, angiogenesis and cell-autonomous immunity. Acts as a key immune sensor by catalyzing ubiquitination of the lipid A moiety of bacterial lipopolysaccharide (LPS) via its RZ-type zinc-finger: restricts the proliferation of cytosolic bacteria, such as Salmonella, by generating the bacterial ubiquitin coat through the ubiquitination of LPS. Also acts indirectly by mediating the recruitment of the LUBAC complex, which conjugates linear polyubiquitin chains. Ubiquitination of LPS triggers cell-autonomous immunity, such as antibacterial autophagy, leading to degradation of the microbial invader. Involved in lipid metabolism by regulating fat storage and lipid droplet formation; act by inhibiting the lipolytic process. Also regulates lipotoxicity by inhibiting desaturation of fatty acids. Also acts as an E3 ubiquitin-protein ligase via its RING-type zinc finger: mediates 'Lys-63'-linked ubiquitination of target proteins. Involved in the non-canonical Wnt signaling pathway in vascular development: acts by mediating ubiquitination and degradation of FLNA and NFATC2 downstream of RSPO3, leading to inhibit the non-canonical Wnt signaling pathway and promoting vessel regression. Also has ATPase activity; ATPase activity is required for ubiquitination of LPS. This is E3 ubiquitin-protein ligase RNF213 from Mus musculus (Mouse).